Reading from the N-terminus, the 267-residue chain is Tryptophan synthase alpha chain (267 aa).

Catalysis depends on proton acceptor residues Glu44 and Asp55.

Belongs to the TrpA family. In terms of assembly, tetramer of two alpha and two beta chains.

The enzyme catalyses (1S,2R)-1-C-(indol-3-yl)glycerol 3-phosphate + L-serine = D-glyceraldehyde 3-phosphate + L-tryptophan + H2O. It participates in amino-acid biosynthesis; L-tryptophan biosynthesis; L-tryptophan from chorismate: step 5/5. Its function is as follows. The alpha subunit is responsible for the aldol cleavage of indoleglycerol phosphate to indole and glyceraldehyde 3-phosphate. The sequence is that of Tryptophan synthase alpha chain from Coxiella burnetii (strain Dugway 5J108-111).